The primary structure comprises 475 residues: Tubulin epsilon chain (475 aa).

Position 148–154 (148–154) interacts with GTP; sequence GGGTGSG.

This sequence belongs to the tubulin family. In terms of assembly, found in a complex with TEDC1, TEDC2, TUBE1 and TUBD1.

It is found in the cytoplasm. The protein localises to the cytoskeleton. Its subcellular location is the microtubule organizing center. It localises to the centrosome. The chain is Tubulin epsilon chain (TUBE1) from Homo sapiens (Human).